Here is a 295-residue protein sequence, read N- to C-terminus: RNA polymerase sigma-C factor (295 aa).

Residues 73-86 (DLIQEANIGLMKAV) carry the Polymerase core binding motif. The segment at residues 250-269 (LSELGEHFGFSRERARQLEI) is a DNA-binding region (H-T-H motif).

The protein belongs to the sigma-70 factor family.

Its function is as follows. Sigma factors are initiation factors that promote the attachment of RNA polymerase to specific initiation sites and are then released. This sigma factor is essential for normal fruiting body formation. The protein is RNA polymerase sigma-C factor (sigC) of Myxococcus xanthus.